The chain runs to 225 residues: MATYALQMAALVLGGVGMVGTVAVTIMPQWRVSAFIESNIVVFENRWEGLWMNCMRHANIRMQCKVYDSLLALSPDLQASRGLMCAASVLAFLAFMTAILGMKCTRCTGDDENVKSRILLTAGIIFFITGLVVLIPVSWVANSIIRDFYNPLVDVALKRELGEALYIGWTTALVLIAGGALFCCVFCCTERSNSYRYSVPSHRTTQRSFHAEKRSPSIYSKSQYV.

Over 1-7 (MATYALQ) the chain is Cytoplasmic. A helical membrane pass occupies residues 8–28 (MAALVLGGVGMVGTVAVTIMP). Residues 29–81 (QWRVSAFIESNIVVFENRWEGLWMNCMRHANIRMQCKVYDSLLALSPDLQASR) lie on the Extracellular side of the membrane. A helical transmembrane segment spans residues 82–102 (GLMCAASVLAFLAFMTAILGM). Residues 103–117 (KCTRCTGDDENVKSR) lie on the Cytoplasmic side of the membrane. Residues 118–138 (ILLTAGIIFFITGLVVLIPVS) traverse the membrane as a helical segment. Residues 139-166 (WVANSIIRDFYNPLVDVALKRELGEALY) are Extracellular-facing. A helical transmembrane segment spans residues 167-187 (IGWTTALVLIAGGALFCCVFC). The Cytoplasmic segment spans residues 188–225 (CTERSNSYRYSVPSHRTTQRSFHAEKRSPSIYSKSQYV). Lysine 213 participates in a covalent cross-link: Glycyl lysine isopeptide (Lys-Gly) (interchain with G-Cter in ubiquitin). The interactions with TJP1, TJP2 and TJP3 stretch occupies residues 224–225 (YV).

Belongs to the claudin family. Can form heteropolymeric strands with other claudins. Interacts with CLDN4. Directly interacts with TJP1/ZO-1, TJP2/ZO-2 and TJP3/ZO-3. Interacts with KLHL3. In terms of processing, ubiquitinated by the BCR(KLHL3) E3 ubiquitin ligase complex in the kidney, leading to its degradation. As to expression, expressed primarily in lung and kidney. Present in both cortical and medullar collecting ducts (at protein level).

Its subcellular location is the cell junction. The protein resides in the tight junction. It is found in the cell membrane. The catalysed reaction is chloride(in) = chloride(out). The enzyme catalyses bromide(in) = bromide(out). It carries out the reaction iodide(out) = iodide(in). It catalyses the reaction fluoride(in) = fluoride(out). Functionally, can associate with other claudins to regulate tight junction structural and functional strand dynamics. May coassemble with CLDN4 into tight junction strands containing anion-selective channels that convey paracellular chloride permeability in renal collecting ducts. Cannot form tight junction strands on its own. The polypeptide is Claudin-8 (Mus musculus (Mouse)).